Consider the following 514-residue polypeptide: Bifunctional purine biosynthesis protein PurH (514 aa).

The MGS-like domain occupies 1-146 (MARLALLSVS…KNFAHLAVLC (146 aa)).

The protein belongs to the PurH family.

The enzyme catalyses (6R)-10-formyltetrahydrofolate + 5-amino-1-(5-phospho-beta-D-ribosyl)imidazole-4-carboxamide = 5-formamido-1-(5-phospho-D-ribosyl)imidazole-4-carboxamide + (6S)-5,6,7,8-tetrahydrofolate. It catalyses the reaction IMP + H2O = 5-formamido-1-(5-phospho-D-ribosyl)imidazole-4-carboxamide. The protein operates within purine metabolism; IMP biosynthesis via de novo pathway; 5-formamido-1-(5-phospho-D-ribosyl)imidazole-4-carboxamide from 5-amino-1-(5-phospho-D-ribosyl)imidazole-4-carboxamide (10-formyl THF route): step 1/1. Its pathway is purine metabolism; IMP biosynthesis via de novo pathway; IMP from 5-formamido-1-(5-phospho-D-ribosyl)imidazole-4-carboxamide: step 1/1. This chain is Bifunctional purine biosynthesis protein PurH, found in Nostoc punctiforme (strain ATCC 29133 / PCC 73102).